A 125-amino-acid polypeptide reads, in one-letter code: Small ribosomal subunit protein uS12 (125 aa).

At Asp89 the chain carries 3-methylthioaspartic acid. The interval 106 to 125 (GVKDRKQSRSKYGAKRPKKA) is disordered. Residues 113-125 (SRSKYGAKRPKKA) are compositionally biased toward basic residues.

The protein belongs to the universal ribosomal protein uS12 family. Part of the 30S ribosomal subunit. Contacts proteins S8 and S17. May interact with IF1 in the 30S initiation complex.

Its function is as follows. With S4 and S5 plays an important role in translational accuracy. Interacts with and stabilizes bases of the 16S rRNA that are involved in tRNA selection in the A site and with the mRNA backbone. Located at the interface of the 30S and 50S subunits, it traverses the body of the 30S subunit contacting proteins on the other side and probably holding the rRNA structure together. The combined cluster of proteins S8, S12 and S17 appears to hold together the shoulder and platform of the 30S subunit. The chain is Small ribosomal subunit protein uS12 from Variovorax paradoxus (strain S110).